Consider the following 1182-residue polypeptide: CRISPR-associated endoribonuclease Cas13a (1182 aa).

Positions 132–279 form a coiled coil; the sequence is FNNLIEKVQN…ENNSDNKLKQ (148 aa). The segment at 366-508 is HEPN-like fold 1; that stretch reads YIKNTGQLET…NNEEIKGYFI (143 aa). Positions 896 to 955 form a coiled coil; it reads KVEKENIEDYNKKEEIEQKKKSNIEKLQDLKVELHKKWEQNKITEKEIEKYNNTTRKINE. The HEPN-like fold 2 stretch occupies residues 965-1120; the sequence is LQNVYLLHEM…QNHILKSTKT (156 aa).

This sequence belongs to the CRISPR-associated endoribonuclease Cas13a family. The cofactor is a divalent metal cation.

Its activity is regulated as follows. Target RNA acts as an activator for non-specific ssRNA degradation. CRISPR (clustered regularly interspaced short palindromic repeat), is an adaptive immune system that provides protection against mobile genetic elements (viruses, transposable elements and conjugative plasmids). CRISPR clusters contain sequences complementary to antecedent mobile elements and target invading nucleic acids. Unlike many single-component effectors, this CRISPR-Cas system targets RNA. CRISPR clusters are transcribed from pre-CRISPR RNA (crRNA) and processed into crRNA by this protein. Cleaves linear target ssRNA in a pre-crRNA-dependent fashion, preferentially before U residues. Binding a viable target RNA target activates this protein for non-specific RNA degradation in vitro (called collateral RNA degradation), which is fairly sensitive as it requires picomolar levels of viable target RNA. In Leptotrichia wadei (strain F0279), this protein is CRISPR-associated endoribonuclease Cas13a.